The sequence spans 371 residues: Ferrochelatase (371 aa).

Fe cation contacts are provided by H218 and E299.

It belongs to the ferrochelatase family.

Its subcellular location is the cytoplasm. It catalyses the reaction heme b + 2 H(+) = protoporphyrin IX + Fe(2+). It functions in the pathway porphyrin-containing compound metabolism; protoheme biosynthesis; protoheme from protoporphyrin-IX: step 1/1. In terms of biological role, catalyzes the ferrous insertion into protoporphyrin IX. The chain is Ferrochelatase from Ralstonia pickettii (strain 12J).